The chain runs to 284 residues: MPRYDDRYGNTRLYVGRLSSRTRTRDLERLFSRYGRVRDVDMKRDYAFVEFSDPRDADDARYYLDGRDFDGSRITVEASRGAPRGSRDNGSRGPPPGSGRCFNCGVDGHWARDCTAGDWKNKCYRCGERGHIERNCKNSPSPKKARQGGSYSRSPVKSRSPRRRRSPSRSRSYSRGRSYSRSRSPVRREKSVEDRSRSPKAMERSVSPKGRDQSLSPDRKVIDASPKRGSDYDGSPKENGNGRNSASPIVGGGESPVGLNGQDRSPIDDEAELSRPSPKGSESP.

One can recognise an RRM domain in the interval 11 to 81 (TRLYVGRLSS…SRITVEASRG (71 aa)). The interval 74–97 (ITVEASRGAPRGSRDNGSRGPPPG) is disordered. 2 consecutive CCHC-type zinc fingers follow at residues 99 to 116 (GRCF…DCTA) and 121 to 138 (NKCY…NCKN). The interval 132 to 284 (IERNCKNSPS…RPSPKGSESP (153 aa)) is disordered. The segment covering 159 to 180 (RSPRRRRSPSRSRSYSRGRSYS) has biased composition (basic residues). Phosphoserine occurs at positions 166, 168, and 184. A compositionally biased stretch (basic and acidic residues) spans 186–203 (VRREKSVEDRSRSPKAME). Ser205, Ser207, Ser214, Ser216, Ser225, Ser235, Ser255, Ser265, Ser277, and Ser281 each carry phosphoserine. Basic and acidic residues predominate over residues 209-236 (KGRDQSLSPDRKVIDASPKRGSDYDGSP).

This sequence belongs to the splicing factor SR family. RS2Z subfamily. As to quaternary structure, component of the spliceosome. Extensively phosphorylated on serine residues in the RS domain.

The protein localises to the nucleus. In terms of biological role, probably involved in intron recognition and spliceosome assembly. In Arabidopsis thaliana (Mouse-ear cress), this protein is Serine/arginine-rich splicing factor RS2Z32 (RS2Z32).